The following is a 158-amino-acid chain: Xanthine-guanine phosphoribosyltransferase (158 aa).

5-phospho-alpha-D-ribose 1-diphosphate-binding positions include 38 to 39 and 90 to 98; these read RG and DDLVDTGGT. Asp-91 serves as a coordination point for Mg(2+). Guanine-binding residues include Asp-94 and Ile-137. Xanthine is bound by residues Asp-94 and Ile-137. GMP contacts are provided by residues 94-98 and 136-137; these read DTGGT and WI.

It belongs to the purine/pyrimidine phosphoribosyltransferase family. XGPT subfamily. Homotetramer. Mg(2+) is required as a cofactor.

It localises to the cell inner membrane. It carries out the reaction GMP + diphosphate = guanine + 5-phospho-alpha-D-ribose 1-diphosphate. The enzyme catalyses XMP + diphosphate = xanthine + 5-phospho-alpha-D-ribose 1-diphosphate. The catalysed reaction is IMP + diphosphate = hypoxanthine + 5-phospho-alpha-D-ribose 1-diphosphate. Its pathway is purine metabolism; GMP biosynthesis via salvage pathway; GMP from guanine: step 1/1. The protein operates within purine metabolism; XMP biosynthesis via salvage pathway; XMP from xanthine: step 1/1. Its function is as follows. Purine salvage pathway enzyme that catalyzes the transfer of the ribosyl-5-phosphate group from 5-phospho-alpha-D-ribose 1-diphosphate (PRPP) to the N9 position of the 6-oxopurines guanine and xanthine to form the corresponding ribonucleotides GMP (guanosine 5'-monophosphate) and XMP (xanthosine 5'-monophosphate), with the release of PPi. To a lesser extent, also acts on hypoxanthine. The chain is Xanthine-guanine phosphoribosyltransferase from Buchnera aphidicola subsp. Acyrthosiphon pisum (strain APS) (Acyrthosiphon pisum symbiotic bacterium).